The sequence spans 509 residues: Lengsin (509 aa).

Residues 1-34 form a disordered region; it reads MNNEEDLLQEDSTRDEGNETEANSMNTLRRTRKK. The 95-residue stretch at 83–177 folds into the GS beta-grasp domain; that stretch reads NRLQFVRFEA…VICDTFTVTG (95 aa). Residues 184-509 form the GS catalytic domain; sequence PRYIAKRQLS…ERNKFLEYFI (326 aa).

Belongs to the glutamine synthetase family. As to quaternary structure, dodecamer. Interacts with BFSP2 and VIM. As to expression, abundantly expressed in lens.

In terms of biological role, may act as a component of the cytoskeleton or as a chaperone for the reorganization of intermediate filament proteins during terminal differentiation in the lens. Does not seem to have enzymatic activity. The sequence is that of Lengsin (LGSN) from Homo sapiens (Human).